The following is a 216-amino-acid chain: ATP phosphoribosyltransferase (216 aa).

This sequence belongs to the ATP phosphoribosyltransferase family. Short subfamily. As to quaternary structure, heteromultimer composed of HisG and HisZ subunits.

The protein resides in the cytoplasm. The enzyme catalyses 1-(5-phospho-beta-D-ribosyl)-ATP + diphosphate = 5-phospho-alpha-D-ribose 1-diphosphate + ATP. It participates in amino-acid biosynthesis; L-histidine biosynthesis; L-histidine from 5-phospho-alpha-D-ribose 1-diphosphate: step 1/9. Catalyzes the condensation of ATP and 5-phosphoribose 1-diphosphate to form N'-(5'-phosphoribosyl)-ATP (PR-ATP). Has a crucial role in the pathway because the rate of histidine biosynthesis seems to be controlled primarily by regulation of HisG enzymatic activity. The protein is ATP phosphoribosyltransferase of Microcystis aeruginosa (strain NIES-843 / IAM M-2473).